The chain runs to 122 residues: Holo-[acyl-carrier-protein] synthase (122 aa).

Aspartate 8 and glutamate 57 together coordinate Mg(2+).

This sequence belongs to the P-Pant transferase superfamily. AcpS family. Mg(2+) serves as cofactor.

It localises to the cytoplasm. It carries out the reaction apo-[ACP] + CoA = holo-[ACP] + adenosine 3',5'-bisphosphate + H(+). Transfers the 4'-phosphopantetheine moiety from coenzyme A to a Ser of acyl-carrier-protein. This chain is Holo-[acyl-carrier-protein] synthase, found in Protochlamydia amoebophila (strain UWE25).